A 390-amino-acid polypeptide reads, in one-letter code: MLSKPMELLRPSKGMINVHPIQRGGILTEEARKVLLEWGDGYSMCDICLEGRVDLLDKPPVKRFKEEVAEFLGMDEVRFTAGARHAKFVAMSGFKGALVVDSLAHYTTYIAAELNGLRVYEVPNTGYPEFRIEAESYTDVFEKVKEETGDYPAVALLTHADYKYGNLADAKKVAEICRDYGIPLILNTAYTSGIMEVSGRETGCDFIVASGHKSWAATAPIGILATTFEFAERVFRVSEVRGNWSGRAFTKKEVALFGCSPVYGLPLVTLMASFPVVKERVKRWKEEVEKARWFVEEMEKIEGVMLLGERPKNHTLMNFETPSFNLIAKKHRRKGYFLYHELKERGIFGVQPGMTRNVKLNVYGLSWEEVERVAEAFKEIAEKYGLEVED.

Pyridoxal 5'-phosphate-binding positions include 83–84 (AR), Asn-187, and 210–212 (SGH). Position 213 is an N6-(pyridoxal phosphate)lysine (Lys-213).

Belongs to the SepCysS family. Homodimer. Interacts with SepRS. It depends on pyridoxal 5'-phosphate as a cofactor.

It catalyses the reaction O-phospho-L-seryl-tRNA(Cys) + hydrogen sulfide + H(+) = L-cysteinyl-tRNA(Cys) + phosphate. Functionally, converts O-phospho-L-seryl-tRNA(Cys) (Sep-tRNA(Cys)) to L-cysteinyl-tRNA(Cys) (Cys-tRNA(Cys)). The polypeptide is O-phospho-L-seryl-tRNA:Cys-tRNA synthase 2 (Archaeoglobus fulgidus (strain ATCC 49558 / DSM 4304 / JCM 9628 / NBRC 100126 / VC-16)).